Consider the following 471-residue polypeptide: 6-phosphofructo-2-kinase/fructose-2,6-bisphosphatase 1 (471 aa).

Ser-2 carries the post-translational modification N-acetylserine. A 6-phosphofructo-2-kinase region spans residues 2 to 250 (SREMGELTQT…AYYLMNIHVT (249 aa)). Residue Ser-33 is modified to Phosphoserine; by PKA. 49–57 (GLPARGKTY) is an ATP binding site. Beta-D-fructose 6-phosphate contacts are provided by Arg-82 and Arg-105. The active site involves Asp-131. Thr-133 and Arg-139 together coordinate beta-D-fructose 6-phosphate. Ser-141 carries the phosphoserine modification. The active site involves Cys-161. 170–175 (NIKQVK) contributes to the ATP binding site. 3 residues coordinate beta-D-fructose 6-phosphate: Lys-175, Arg-196, and Tyr-200. The segment at 251–471 (PRSIYLCRHG…EALDTVPAHY (221 aa)) is fructose-2,6-bisphosphatase. Arg-258 is a beta-D-fructose 2,6-bisphosphate binding site. The active-site Tele-phosphohistidine intermediate is the His-259. 3 residues coordinate beta-D-fructose 2,6-bisphosphate: Asn-265, Gly-271, and Arg-308. Glu-328 functions as the Proton donor/acceptor in the catalytic mechanism. Beta-D-fructose 2,6-bisphosphate is bound by residues Tyr-339, Arg-353, Lys-357, Tyr-368, Gln-394, and Arg-398. 350–353 (FALR) lines the ATP pocket. Residues 394–398 (QAVMR) and Tyr-430 contribute to the ATP site.

This sequence in the C-terminal section; belongs to the phosphoglycerate mutase family. Homodimer. Liver.

It catalyses the reaction beta-D-fructose 2,6-bisphosphate + H2O = beta-D-fructose 6-phosphate + phosphate. The enzyme catalyses beta-D-fructose 6-phosphate + ATP = beta-D-fructose 2,6-bisphosphate + ADP + H(+). With respect to regulation, phosphorylation at Ser-33 inhibits the kinase and activates the bisphosphatase. Its function is as follows. Synthesis and degradation of fructose 2,6-bisphosphate. The polypeptide is 6-phosphofructo-2-kinase/fructose-2,6-bisphosphatase 1 (Rattus norvegicus (Rat)).